We begin with the raw amino-acid sequence, 341 residues long: Delta(1)-pyrroline-2-carboxylate/Delta(1)-piperideine-2-carboxylate reductase (341 aa).

Ser-52 functions as the Charge relay system in the catalytic mechanism. His-53 (proton donor) is an active-site residue. Residue Arg-57 coordinates substrate. Residue 125-129 participates in NADP(+) binding; the sequence is HFAAL. A substrate-binding site is contributed by Thr-165. Residue 183-185 participates in NADP(+) binding; the sequence is DMA. 191-192 provides a ligand contact to substrate; sequence HG. Asp-193 acts as the Charge relay system in catalysis. Residues 235-236 and 308-314 contribute to the NADP(+) site; these read HK and RMPGERR.

This sequence belongs to the LDH2/MDH2 oxidoreductase family. Homodimer.

The catalysed reaction is L-pipecolate + NADP(+) = Delta(1)-piperideine-2-carboxylate + NADPH + H(+). The enzyme catalyses L-proline + NADP(+) = 1-pyrroline-2-carboxylate + NADPH + H(+). It catalyses the reaction N-methyl-L-alanine + NADP(+) + H2O = methylamine + pyruvate + NADPH + H(+). Is inhibited by the substrate analog pyrrole-2-carboxylate, but not by N-formylphenylalanine. Catalyzes the reduction of both Delta(1)-pyrroline-2-carboxylate (Pyr2C) and Delta(1)-piperideine-2-carboxylate (Pip2C) to L-proline and L-pipecolate, respectively, using NADPH as the electron donor. Can use NADH instead of NADPH, although with much less efficiency. Plays an essential role in the catabolism of D-proline and D-lysine, which allows P.putida to grow on each of these amino-acids as a sole carbon source; D-lysine appears to be catabolized only through the pipecolate pathway. Can also catalyze the reverse oxidation reactions, albeit at a much lower rate. To a lesser extent, is able to catalyze in vitro the NADPH-dependent formation of N-alkyl-L-amino acids from the corresponding alpha-oxo acids and alkylamines, e.g. the formation of N-methylalanine from pyruvate and N-methylamine; cannot use ammonia as substrate for these reductive amination reactions. Shows neither malate dehydrogenase nor lactate dehydrogenase activity. The sequence is that of Delta(1)-pyrroline-2-carboxylate/Delta(1)-piperideine-2-carboxylate reductase from Pseudomonas putida (Arthrobacter siderocapsulatus).